We begin with the raw amino-acid sequence, 184 residues long: Putative manganese efflux pump MntP (184 aa).

The next 6 helical transmembrane spans lie at 3-23, 36-56, 65-85, 103-123, 126-146, and 163-183; these read LLSM…ISVS, ALIS…LGWV, VSAL…LKMI, LLVL…SFAL, ISIW…SLAG, and ALGG…NVSF.

The protein belongs to the MntP (TC 9.B.29) family.

The protein resides in the cell membrane. In terms of biological role, probably functions as a manganese efflux pump. This is Putative manganese efflux pump MntP from Methanothermobacter thermautotrophicus (strain ATCC 29096 / DSM 1053 / JCM 10044 / NBRC 100330 / Delta H) (Methanobacterium thermoautotrophicum).